The following is a 145-amino-acid chain: Large ribosomal subunit protein uL13 (145 aa).

It belongs to the universal ribosomal protein uL13 family. As to quaternary structure, part of the 50S ribosomal subunit.

Its function is as follows. This protein is one of the early assembly proteins of the 50S ribosomal subunit, although it is not seen to bind rRNA by itself. It is important during the early stages of 50S assembly. The polypeptide is Large ribosomal subunit protein uL13 (Haloquadratum walsbyi (strain DSM 16790 / HBSQ001)).